The chain runs to 79 residues: MQVLVRDNNVDQALRVLKKKMQREGLFREMKARSAFEKPSEKRAREKAEAIRRQRKLARKKLQREGLLPAPKKVLRPTR.

The disordered stretch occupies residues 57–79 (LARKKLQREGLLPAPKKVLRPTR).

It belongs to the bacterial ribosomal protein bS21 family.

This is Small ribosomal subunit protein bS21A from Rhizobium johnstonii (strain DSM 114642 / LMG 32736 / 3841) (Rhizobium leguminosarum bv. viciae).